We begin with the raw amino-acid sequence, 529 residues long: Zinc finger CCCH domain-containing protein 65 (529 aa).

Residues 1–10 (MADADARAPP) are compositionally biased toward basic and acidic residues. Disordered stretches follow at residues 1–36 (MADADARAPPKSDPGATPIGSISPSSAAPAAGEDEV) and 134–179 (PARK…GSYV). Positions 14–31 (PGATPIGSISPSSAAPAA) are enriched in low complexity. 3 consecutive C3H1-type zinc fingers follow at residues 108–136 (RPGEPDCTYYVKFGSCRFGMKCKFNHPAR), 237–265 (GSSQEECKYYSTPGGCKFGKACKYLHRDG), and 285–313 (RPGEKECPYYMRTGSCKYATNCKFHHPDP). Residues 313-347 (PSNVASKDPQLEHENGDAPQQDVQGSSSQPNASIW) form a disordered region. A compositionally biased stretch (polar residues) spans 333–344 (QDVQGSSSQPNA). 2 consecutive C3H1-type zinc fingers follow at residues 433 to 461 (RPGQPECQHFVKSGFCKFRMKCKYHHPRS) and 477 to 505 (KPDQPVCTYYGRYGVCKFGPACAYNHPFN).

This chain is Zinc finger CCCH domain-containing protein 65, found in Oryza sativa subsp. japonica (Rice).